We begin with the raw amino-acid sequence, 482 residues long: Anaerobic nitric oxide reductase flavorubredoxin (482 aa).

A zinc metallo-hydrolase region spans residues 30–210; that stretch reads LRGSSYNSYL…PFSRLVTPKI (181 aa). Fe cation-binding residues include His-79, Glu-81, Asp-83, His-147, Asp-166, and His-227. The region spanning 254–393 is the Flavodoxin-like domain; sequence ITLFYDTMSN…ICRQHGREIA (140 aa). Residues 260–264 and 342–369 contribute to the FMN site; these read TMSNN and AFGS…EMSM. A Rubredoxin-like domain is found at 426 to 477; sequence GPCMQCSVCQWVYDPALGEPLQDVAPGTPWSDVPDNFLCPECSLGKDVFDVL. Residues Cys-431, Cys-434, Cys-464, and Cys-467 each coordinate Fe cation.

The protein in the N-terminal section; belongs to the zinc metallo-hydrolase group 3 family. In terms of assembly, homotetramer. Fe cation serves as cofactor. The cofactor is FMN.

Its subcellular location is the cytoplasm. The protein operates within nitrogen metabolism; nitric oxide reduction. Functionally, anaerobic nitric oxide reductase; uses NADH to detoxify nitric oxide (NO), protecting several 4Fe-4S NO-sensitive enzymes. Has at least 2 reductase partners, only one of which (NorW, flavorubredoxin reductase) has been identified. NO probably binds to the di-iron center; electrons enter from the NorW at rubredoxin and are transferred sequentially to the FMN center and the di-iron center. Also able to function as an aerobic oxygen reductase. In Enterobacter sp. (strain 638), this protein is Anaerobic nitric oxide reductase flavorubredoxin.